The primary structure comprises 290 residues: Fructose-1,6-bisphosphatase class 1 (290 aa).

Mg(2+) contacts are provided by Glu-78, Asp-96, Leu-98, and Asp-99. Substrate is bound by residues 99 to 102 (DGSS), Tyr-201, and Lys-226. Glu-232 provides a ligand contact to Mg(2+).

This sequence belongs to the FBPase class 1 family. In terms of assembly, homotetramer. The cofactor is Mg(2+).

It is found in the cytoplasm. It carries out the reaction beta-D-fructose 1,6-bisphosphate + H2O = beta-D-fructose 6-phosphate + phosphate. Its pathway is carbohydrate biosynthesis; gluconeogenesis. The chain is Fructose-1,6-bisphosphatase class 1 from Helicobacter acinonychis (strain Sheeba).